The following is a 215-amino-acid chain: T-complex protein 10A homolog 1 (215 aa).

The interval 1-25 (MLAGQLEARDPKEGTHPEDPCPGAG) is disordered. A compositionally biased stretch (basic and acidic residues) spans 7-19 (EARDPKEGTHPED). The stretch at 69-110 (ADVHGKLRSHIDALREQNMELREKLRALQLQRWKARKKSAAS) forms a coiled coil. Residues 75-96 (LRSHIDALREQNMELREKLRAL) form a leucine-zipper region. Residues 150–163 (ATLLGQRSSSNNSA) are compositionally biased toward polar residues. Residues 150–215 (ATLLGQRSSS…TPCAERRGGV (66 aa)) form a disordered region.

The protein belongs to the TCP10 family. In terms of assembly, self-associates (via leucine zipper). Interacts (via leucine zipper) with ZIPK/DAPK3 (via leucine zipper). Interacts with MAD4. In terms of tissue distribution, expressed in liver and testis. Expressed in the seminiferous tubules (at protein level).

It is found in the nucleus. May be involved in transcriptional regulation. Has in vitro transcription inhibition activity. Acts as a tumor suppressor in hepatocellular carcinoma (HCC) cells. The sequence is that of T-complex protein 10A homolog 1 (TCP10L) from Homo sapiens (Human).